Reading from the N-terminus, the 498-residue chain is Glycerol kinase (498 aa).

Threonine 11 lines the ADP pocket. The ATP site is built by threonine 11, serine 12, and serine 13. Position 11 (threonine 11) interacts with sn-glycerol 3-phosphate. An ADP-binding site is contributed by arginine 15. Sn-glycerol 3-phosphate contacts are provided by arginine 81, glutamate 82, tyrosine 133, and aspartate 242. Residues arginine 81, glutamate 82, tyrosine 133, aspartate 242, and glutamine 243 each coordinate glycerol. ADP-binding residues include threonine 264 and glycine 307. ATP-binding residues include threonine 264, glycine 307, glutamine 311, and glycine 408. Glycine 408 and asparagine 412 together coordinate ADP.

The protein belongs to the FGGY kinase family.

The catalysed reaction is glycerol + ATP = sn-glycerol 3-phosphate + ADP + H(+). The protein operates within polyol metabolism; glycerol degradation via glycerol kinase pathway; sn-glycerol 3-phosphate from glycerol: step 1/1. Its activity is regulated as follows. Inhibited by fructose 1,6-bisphosphate (FBP). Its function is as follows. Key enzyme in the regulation of glycerol uptake and metabolism. Catalyzes the phosphorylation of glycerol to yield sn-glycerol 3-phosphate. This Ralstonia nicotianae (strain ATCC BAA-1114 / GMI1000) (Ralstonia solanacearum) protein is Glycerol kinase.